The chain runs to 361 residues: Protein-L-isoaspartate O-methyltransferase domain-containing protein 2 (361 aa).

Residue Gly2 is the site of N-myristoyl glycine attachment. Residue Ser64 is part of the active site. AdoMet binding motif regions lie at residues 85–94 (LNLGSGTGYL), 160–164 (YDRVY), and 181–191 (LKVGGILVMPL). The BC-box stretch occupies residues 240–250 (VRSLQDLARIA). Residues 303–312 (SNPSDDNSSG) are compositionally biased toward polar residues. Positions 303–335 (SNPSDDNSSGDLEEERREEEATTPPDAKPEPPV) are disordered. The interval 345 to 348 (LPLP) is CUL-box.

Belongs to the methyltransferase superfamily. L-isoaspartyl/D-aspartyl protein methyltransferase family.

The protein resides in the cytoplasm. Functionally, may act as a substrate recognition component of an ECS (Elongin BC-CUL5-SOCS-box protein) E3 ubiquitin ligase complex which mediates the ubiquitination and subsequent proteasomal degradation of target proteins. May bind to the methyltransferase cofactor S-adenosylmethionine (AdoMet) via the N-terminal AdoMet binding motif, but probably does not display methyltransferase activity. This chain is Protein-L-isoaspartate O-methyltransferase domain-containing protein 2 (PCMTD2), found in Bos taurus (Bovine).